The sequence spans 423 residues: Adenylosuccinate synthetase (423 aa).

GTP-binding positions include 12–18 (GDEGKGK) and 40–42 (GHT). Catalysis depends on aspartate 13, which acts as the Proton acceptor. Mg(2+)-binding residues include aspartate 13 and glycine 40. IMP is bound by residues 13–16 (DEGK), 38–41 (NAGH), threonine 129, arginine 143, glutamine 221, threonine 236, and arginine 300. The active-site Proton donor is histidine 41. 296–302 (AVTGRER) lines the substrate pocket. GTP contacts are provided by residues arginine 302, 328 to 330 (KSD), and 408 to 410 (SVG).

The protein belongs to the adenylosuccinate synthetase family. As to quaternary structure, homodimer. It depends on Mg(2+) as a cofactor.

Its subcellular location is the cytoplasm. It catalyses the reaction IMP + L-aspartate + GTP = N(6)-(1,2-dicarboxyethyl)-AMP + GDP + phosphate + 2 H(+). The protein operates within purine metabolism; AMP biosynthesis via de novo pathway; AMP from IMP: step 1/2. Its function is as follows. Plays an important role in the de novo pathway of purine nucleotide biosynthesis. Catalyzes the first committed step in the biosynthesis of AMP from IMP. This Phocaeicola vulgatus (strain ATCC 8482 / DSM 1447 / JCM 5826 / CCUG 4940 / NBRC 14291 / NCTC 11154) (Bacteroides vulgatus) protein is Adenylosuccinate synthetase.